The following is a 96-amino-acid chain: MDYTQILIKPVISEKATDIKEAANQVAFYVLPSANKTEVKKAVESAFDVKVDSVRIVRKRPGLRRKFGRVVGKLSGYKKAYVKLSEGEKIEFFEGV.

This sequence belongs to the universal ribosomal protein uL23 family. In terms of assembly, part of the 50S ribosomal subunit. Contacts protein L29, and trigger factor when it is bound to the ribosome.

In terms of biological role, one of the early assembly proteins it binds 23S rRNA. One of the proteins that surrounds the polypeptide exit tunnel on the outside of the ribosome. Forms the main docking site for trigger factor binding to the ribosome. In Maridesulfovibrio salexigens (strain ATCC 14822 / DSM 2638 / NCIMB 8403 / VKM B-1763) (Desulfovibrio salexigens), this protein is Large ribosomal subunit protein uL23.